The primary structure comprises 204 residues: Ribosome maturation factor RimP (204 aa).

Belongs to the RimP family.

The protein resides in the cytoplasm. In terms of biological role, required for maturation of 30S ribosomal subunits. This chain is Ribosome maturation factor RimP, found in Allorhizobium ampelinum (strain ATCC BAA-846 / DSM 112012 / S4) (Agrobacterium vitis (strain S4)).